Consider the following 375-residue polypeptide: Formate dehydrogenase (375 aa).

2 residues coordinate substrate: I94 and N120. Residues 175–176, D196, 231–235, T257, D283, 312–315, and S358 each bind NAD(+); these read RI, PLHEK, and HMSG.

The protein belongs to the D-isomer specific 2-hydroxyacid dehydrogenase family. FDH subfamily. In terms of assembly, homodimer.

Its subcellular location is the cytoplasm. The enzyme catalyses formate + NAD(+) = CO2 + NADH. In terms of biological role, catalyzes the NAD(+)-dependent oxidation of formate to carbon dioxide. Formate oxidation is the final step in the methanol oxidation pathway in methylotrophic microorganisms. Has a role in the detoxification of exogenous formate in non-methylotrophic organisms. In Neurospora crassa (strain ATCC 24698 / 74-OR23-1A / CBS 708.71 / DSM 1257 / FGSC 987), this protein is Formate dehydrogenase.